The primary structure comprises 300 residues: Ubiquitin thioesterase otu2 (300 aa).

2 disordered regions span residues 23 to 73 (RKQL…QQED) and 89 to 141 (TAEK…SEKM). Residues 48–61 (LSQKHATERQKLDK) are compositionally biased toward basic and acidic residues. Residues 62-71 (GDEETNETQQ) are compositionally biased toward acidic residues. Over residues 89–109 (TAEKSSVQSSLNTKENTPQQP) the composition is skewed to polar residues. The span at 115 to 141 (RQKERLERRKAEMKKMSEQAELESEKM) shows a compositional bias: basic and acidic residues. One can recognise an OTU domain in the interval 161–298 (LVAVDIPADG…GAHYNSLLYR (138 aa)).

The protein resides in the cytoplasm. It carries out the reaction Thiol-dependent hydrolysis of ester, thioester, amide, peptide and isopeptide bonds formed by the C-terminal Gly of ubiquitin (a 76-residue protein attached to proteins as an intracellular targeting signal).. Its function is as follows. Hydrolase that can remove conjugated ubiquitin from proteins and may therefore play an important regulatory role at the level of protein turnover by preventing degradation. The sequence is that of Ubiquitin thioesterase otu2 (otu2) from Schizosaccharomyces pombe (strain 972 / ATCC 24843) (Fission yeast).